The following is a 670-amino-acid chain: Acetolactate synthase, chloroplastic (670 aa).

Low complexity-rich tracts occupy residues 1–48 (MAAA…SSSS) and 55–77 (KSSS…TTPS). The N-terminal 55 residues, 1 to 55 (MAAATTTTTTSSSISFSTKPSPSSSKSPLPISRFSLPFSLNPNKSSSSSRRRGIK), are a transit peptide targeting the chloroplast. Residues 1-94 (MAAATTTTTT…ETFISRFAPD (94 aa)) form a disordered region. Residue Glu144 coordinates thiamine diphosphate. Ser186 contributes to the FAD binding site. Residue Gln207 participates in thiamine diphosphate binding. (R)-imazaquin-binding residues include Lys220 and Arg246. Arg246 contributes to the FAD binding site. Lys256 serves as a coordination point for chlorimuron-ethyl. FAD-binding positions include Gly308 and 331–332 (TL). Cys340 is subject to Cysteine sulfinic acid (-SO2H). Residues 349–352 (LGMH) and 371–375 (GVRFD) contribute to the FAD site. 376 to 377 (DR) serves as a coordination point for chlorimuron-ethyl. FAD-binding positions include 395–396 (DI) and 414–415 (DV). The stretch at 414–446 (DVKLALQGMNKVLENRAEELKLDFGVWRNELNV) forms a coiled coil. Residue 487–488 (QH) coordinates thiamine diphosphate. 508-509 (GG) lines the FAD pocket. Residues 511-513 (GAM), 538-540 (DGS), and 565-570 (NQHLGM) each bind thiamine diphosphate. Residues Asp538, Asn565, and His567 each contribute to the Mg(2+) site. Residues Trp574 and Ser653 each coordinate chlorimuron-ethyl.

It belongs to the TPP enzyme family. In terms of assembly, homodimer or homotetramer. The acetolactate synthase complex contains both large catalytic subunits and small regulatory subunits. Homodimer. The acetolactate synthase complex contains 4 homodimers of the large catalytic subunits, and 1 homotetramer of the small regulatory subunits. It depends on Mg(2+) as a cofactor. Requires FAD as cofactor. The cofactor is thiamine diphosphate.

It localises to the plastid. The protein resides in the chloroplast. The catalysed reaction is 2 pyruvate + H(+) = (2S)-2-acetolactate + CO2. It functions in the pathway amino-acid biosynthesis; L-isoleucine biosynthesis; L-isoleucine from 2-oxobutanoate: step 1/4. Its pathway is amino-acid biosynthesis; L-valine biosynthesis; L-valine from pyruvate: step 1/4. Inhibited by asymmetric aryl disulfides, triazolopyrimidine sulfonanilide compounds, isatin derivatives, and sulfonylurea and imidazolinone herbicides. Insensitive to feed-back inhibition by branched-chain amino acids. In terms of biological role, catalyzes the formation of acetolactate from pyruvate, the first step in valine and isoleucine biosynthesis. This Arabidopsis thaliana (Mouse-ear cress) protein is Acetolactate synthase, chloroplastic (ALS).